A 384-amino-acid polypeptide reads, in one-letter code: 4-hydroxy-3-methylbut-2-en-1-yl diphosphate synthase (flavodoxin) 1 (384 aa).

Cys-281, Cys-284, Cys-316, and Glu-323 together coordinate [4Fe-4S] cluster.

Belongs to the IspG family. [4Fe-4S] cluster is required as a cofactor.

The enzyme catalyses (2E)-4-hydroxy-3-methylbut-2-enyl diphosphate + oxidized [flavodoxin] + H2O + 2 H(+) = 2-C-methyl-D-erythritol 2,4-cyclic diphosphate + reduced [flavodoxin]. The protein operates within isoprenoid biosynthesis; isopentenyl diphosphate biosynthesis via DXP pathway; isopentenyl diphosphate from 1-deoxy-D-xylulose 5-phosphate: step 5/6. Its function is as follows. Converts 2C-methyl-D-erythritol 2,4-cyclodiphosphate (ME-2,4cPP) into 1-hydroxy-2-methyl-2-(E)-butenyl 4-diphosphate. In Streptomyces coelicolor (strain ATCC BAA-471 / A3(2) / M145), this protein is 4-hydroxy-3-methylbut-2-en-1-yl diphosphate synthase (flavodoxin) 1.